Reading from the N-terminus, the 1522-residue chain is ATP-binding cassette sub-family C member 3 (1522 aa).

Residues 1–32 are Extracellular-facing; that stretch reads MDRLCGSGELGSKFWDSNLTVYTNTPDLTPCF. Residue Asn18 is glycosylated (N-linked (GlcNAc...) asparagine). Residues 33–53 traverse the membrane as a helical segment; the sequence is QNSLLAWVPCIYLWAALPCYL. Residues 54-73 lie on the Cytoplasmic side of the membrane; it reads FYLRHHRLGYIVLSCLSRLK. Residues 74-94 traverse the membrane as a helical segment; sequence TALGVLLWCISWVDLFYSFHG. Over 95–99 the chain is Extracellular; sequence LVHGS. The helical transmembrane segment at 100–120 threads the bilayer; that stretch reads SPAPVFFITPLLVGITMLLAT. Residues 121-132 lie on the Cytoplasmic side of the membrane; the sequence is LLIQYERLRGVR. The helical transmembrane segment at 133 to 153 threads the bilayer; it reads SSGVLIIFWLLCVICAIIPFR. Residues 154–171 are Extracellular-facing; sequence SKILLALAEGKILDPFRF. The chain crosses the membrane as a helical span at residues 172-192; that stretch reads TTFYIYFALVLCAFILSCFQE. The Cytoplasmic portion of the chain corresponds to 193–301; sequence KPPLFSPENL…KTKKPSFLRA (109 aa). The chain crosses the membrane as a helical span at residues 302 to 322; it reads LVRTFTSSLLMGACFKLIQDL. The ABC transmembrane type-1 1 domain maps to 310–592; it reads LLMGACFKLI…LPQLISGMTQ (283 aa). Topologically, residues 323–347 are extracellular; the sequence is SPSSTHSCSASSSGLFRPHGPYWWG. A helical membrane pass occupies residues 348 to 368; that stretch reads FLLAGLMFVSSTMQTLILHQH. Over 369 to 424 the chain is Cytoplasmic; sequence YHCIFVMALRIRTAIIGVIYRKALTITNSVKREYTVGEMVNLMSVDAQRFMDVSPF. A helical membrane pass occupies residues 425–445; it reads INLLWSAPLQVILAIYFLWQI. The Extracellular portion of the chain corresponds to 446–448; it reads LGP. Residues 449–469 form a helical membrane-spanning segment; the sequence is SALAGVAVIVLLIPLNGAVSM. The Cytoplasmic portion of the chain corresponds to 470–531; it reads KMKTYQVQQM…LLRKGAYLQA (62 aa). The helical transmembrane segment at 532-552 threads the bilayer; sequence ISTFIWVCTPFMVTLITLGVY. At 553 to 574 the chain is on the extracellular side; that stretch reads VCVDKNNVLDAEKAFVSLSLFN. A helical transmembrane segment spans residues 575-595; sequence ILKIPLNLLPQLISGMTQTSV. Residues 596-958 lie on the Cytoplasmic side of the membrane; the sequence is SLKRIQDFLN…VKLSVYWDYA (363 aa). Residues 625 to 849 enclose the ABC transporter 1 domain; sequence ITIHNGTFSW…DGSFANFLRN (225 aa). Residue 659 to 666 participates in ATP binding; sequence GPVGCGKS. Phosphoserine occurs at positions 902 and 905. Residues 959 to 979 traverse the membrane as a helical segment; that stretch reads KSVGLCTTLFICLLYAGQNAV. Residues 966–1247 enclose the ABC transmembrane type-1 2 domain; it reads TLFICLLYAG…MIRTLSDLES (282 aa). Over 980 to 1016 the chain is Extracellular; sequence AIGANVWLSAWTNDVEEHGQQNNTSVRLGVYATLGIL. Asn1001 and Asn1002 each carry an N-linked (GlcNAc...) asparagine glycan. A helical membrane pass occupies residues 1017 to 1037; that stretch reads QGLLVMLSAFTMVVGAIQAAR. The Cytoplasmic portion of the chain corresponds to 1038–1080; the sequence is LLHTALLHNQIRAPQSFFDTTPSGRILNRFSKDIYVIHEVLAP. A helical membrane pass occupies residues 1081 to 1101; the sequence is TILMLFNSFYTSISTIVVIVA. A topological domain (extracellular) is located at residue Ser1102. The chain crosses the membrane as a helical span at residues 1103 to 1123; the sequence is TPLFCVVVLPLAVFYGFVQRF. At 1124–1194 the chain is on the cytoplasmic side; it reads YVATSRQLKR…ASNRWLGVHV (71 aa). Residues 1195–1215 form a helical membrane-spanning segment; that stretch reads EFVGNCVVLFSALFAVIGRNS. Residues 1216–1217 lie on the Extracellular side of the membrane; that stretch reads LN. A helical transmembrane segment spans residues 1218–1238; the sequence is PGLVGLSVSYALQVTLSLNWM. At 1239–1522 the chain is on the cytoplasmic side; it reads IRTLSDLESN…YGMAKDAGLA (284 aa). Residues 1286–1518 form the ABC transporter 2 domain; sequence FRNYSVRYRP…GGIFYGMAKD (233 aa). Residue 1318–1325 coordinates ATP; it reads GRTGAGKS.

It belongs to the ABC transporter superfamily. ABCC family. Conjugate transporter (TC 3.A.1.208) subfamily. Expressed in lung, ileum, colon and liver. Higher in liver of Eisai hyperbilirubinemic rats.

The protein resides in the basolateral cell membrane. It localises to the basal cell membrane. The catalysed reaction is an S-substituted glutathione(in) + ATP + H2O = an S-substituted glutathione(out) + ADP + phosphate + H(+). The enzyme catalyses ATP + H2O + xenobioticSide 1 = ADP + phosphate + xenobioticSide 2.. It carries out the reaction taurocholate(in) + ATP + H2O = taurocholate(out) + ADP + phosphate + H(+). It catalyses the reaction glycocholate(in) + ATP + H2O = glycocholate(out) + ADP + phosphate + H(+). The catalysed reaction is taurolithocholate 3-sulfate(in) + ATP + H2O = taurolithocholate 3-sulfate(out) + ADP + phosphate + H(+). The enzyme catalyses 17beta-estradiol 17-O-(beta-D-glucuronate)(in) + ATP + H2O = 17beta-estradiol 17-O-(beta-D-glucuronate)(out) + ADP + phosphate + H(+). It carries out the reaction dehydroepiandrosterone 3-sulfate(in) + ATP + H2O = dehydroepiandrosterone 3-sulfate(out) + ADP + phosphate + H(+). It catalyses the reaction leukotriene C4(in) + ATP + H2O = leukotriene C4(out) + ADP + phosphate + H(+). The catalysed reaction is (4Z,15Z)-bilirubin IXalpha C8-beta-D-glucuronoside(in) + ATP + H2O = (4Z,15Z)-bilirubin IXalpha C8-beta-D-glucuronoside(out) + ADP + phosphate + H(+). The enzyme catalyses (4Z,15Z)-bilirubin IXalpha C8,C12-beta-D-bisglucuronoside(in) + ATP + H2O = (4Z,15Z)-bilirubin IXalpha C8,C12-beta-D-bisglucuronoside(out) + ADP + phosphate + H(+). It carries out the reaction taurochenodeoxycholate 3-sulfate(in) + ATP + H2O = taurochenodeoxycholate 3-sulfate(out) + ADP + phosphate + H(+). Its function is as follows. ATP-dependent transporter of the ATP-binding cassette (ABC) family that binds and hydrolyzes ATP to enable active transport of various substrates including many drugs, toxicants and endogenous compound across cell membranes. Transports glucuronide conjugates such as bilirubin diglucuronide, estradiol-17-beta-o-glucuronide and GSH conjugates such as leukotriene C4 (LTC4). Transports also various bile salts (taurocholate, glycocholate, taurochenodeoxycholate-3-sulfate, taurolithocholate- 3-sulfate). Does not contribute substantially to bile salt physiology but provides an alternative route for the export of bile acids and glucuronides from cholestatic hepatocytes. May contribute to regulate the transport of organic compounds in testes across the blood-testis-barrier. The protein is ATP-binding cassette sub-family C member 3 (Abcc3) of Rattus norvegicus (Rat).